The primary structure comprises 90 residues: UPF0223 protein SH1855 (90 aa).

Belongs to the UPF0223 family.

The chain is UPF0223 protein SH1855 from Staphylococcus haemolyticus (strain JCSC1435).